We begin with the raw amino-acid sequence, 218 residues long: Uracil-DNA glycosylase (218 aa).

The active-site Proton acceptor is Asp59.

The protein belongs to the uracil-DNA glycosylase (UDG) superfamily. UNG family.

It localises to the cytoplasm. It catalyses the reaction Hydrolyzes single-stranded DNA or mismatched double-stranded DNA and polynucleotides, releasing free uracil.. Functionally, excises uracil residues from the DNA which can arise as a result of misincorporation of dUMP residues by DNA polymerase or due to deamination of cytosine. The sequence is that of Uracil-DNA glycosylase from Staphylococcus saprophyticus subsp. saprophyticus (strain ATCC 15305 / DSM 20229 / NCIMB 8711 / NCTC 7292 / S-41).